The primary structure comprises 211 residues: Arginine exporter protein ArgO (211 aa).

Transmembrane regions (helical) follow at residues 1–21 (MFTY…PLGP), 37–57 (LMIA…GIFG), 68–88 (LLAL…FGAL), 111–131 (IIIT…DTFV), 147–167 (WFAL…ALLA), and 179–199 (AQRI…FQLA).

This sequence belongs to the LysE/ArgO transporter (TC 2.A.75) family.

The protein resides in the cell inner membrane. The enzyme catalyses L-arginine(in) = L-arginine(out). In terms of biological role, involved in the export of arginine. Important to control the intracellular level of arginine and the correct balance between arginine and lysine. This chain is Arginine exporter protein ArgO, found in Klebsiella pneumoniae subsp. pneumoniae (strain ATCC 700721 / MGH 78578).